The primary structure comprises 299 residues: Coenzyme PQQ synthesis protein B (299 aa).

The protein belongs to the PqqB family.

The protein operates within cofactor biosynthesis; pyrroloquinoline quinone biosynthesis. In terms of biological role, may be involved in the transport of PQQ or its precursor to the periplasm. The protein is Coenzyme PQQ synthesis protein B of Xanthomonas euvesicatoria pv. vesicatoria (strain 85-10) (Xanthomonas campestris pv. vesicatoria).